The following is a 615-amino-acid chain: Threonine--tRNA ligase (615 aa).

The editing domain stretch occupies residues 1–132 (MRILQLHCDR…PLAEGFKVIT (132 aa)). The interval 196–495 (PHVALMKRMG…SARGTKPELP (300 aa)) is catalytic. Zn(2+)-binding residues include C288, H340, and H464.

It belongs to the class-II aminoacyl-tRNA synthetase family. Homodimer. Requires Zn(2+) as cofactor.

It is found in the cytoplasm. The enzyme catalyses tRNA(Thr) + L-threonine + ATP = L-threonyl-tRNA(Thr) + AMP + diphosphate + H(+). Its function is as follows. Catalyzes the attachment of threonine to tRNA(Thr) in a two-step reaction: L-threonine is first activated by ATP to form Thr-AMP and then transferred to the acceptor end of tRNA(Thr). Also edits incorrectly charged L-seryl-tRNA(Thr). This chain is Threonine--tRNA ligase (thrS), found in Cenarchaeum symbiosum (strain A).